A 392-amino-acid chain; its full sequence is Tryptophan synthase beta chain (392 aa).

At Lys84 the chain carries N6-(pyridoxal phosphate)lysine.

Belongs to the TrpB family. As to quaternary structure, tetramer of two alpha and two beta chains. Requires pyridoxal 5'-phosphate as cofactor.

It catalyses the reaction (1S,2R)-1-C-(indol-3-yl)glycerol 3-phosphate + L-serine = D-glyceraldehyde 3-phosphate + L-tryptophan + H2O. Its pathway is amino-acid biosynthesis; L-tryptophan biosynthesis; L-tryptophan from chorismate: step 5/5. The beta subunit is responsible for the synthesis of L-tryptophan from indole and L-serine. The protein is Tryptophan synthase beta chain of Campylobacter jejuni subsp. jejuni serotype O:6 (strain 81116 / NCTC 11828).